The sequence spans 1333 residues: Aldehyde oxidase 1 (1333 aa).

The 88-residue stretch at 4–91 (PQLLFYVNGQ…GTAVTTVEGI (88 aa)) folds into the 2Fe-2S ferredoxin-type domain. [2Fe-2S] cluster is bound by residues Cys43, Cys48, Cys51, and Cys73. Gln112 contributes to the Mo-molybdopterin binding site. Positions 113, 116, 148, and 150 each coordinate [2Fe-2S] cluster. Cys150 is a binding site for Mo-molybdopterin. The FAD-binding PCMH-type domain occupies 235 to 420 (FYSNRMTWIS…VSVNIPCSRK (186 aa)). Residues 263-270 (IVMGYTSV), Ala344, Ser353, His357, Asp366, and Leu410 each bind FAD. Mo-molybdopterin-binding positions include 801 to 802 (AF) and Met1042. Ser1063 bears the Phosphoserine mark. Residues 1083-1086 (GSVV), Gln1198, and Leu1263 each bind Mo-molybdopterin. The active-site Proton acceptor; for azaheterocycle hydroxylase activity is the Glu1265.

Belongs to the xanthine dehydrogenase family. In terms of assembly, homodimer. [2Fe-2S] cluster serves as cofactor. It depends on FAD as a cofactor. Mo-molybdopterin is required as a cofactor. The N-terminus is blocked. As to expression, expression in liver (at protein level). Also detected in heart, lung, spleen and kidney.

It localises to the cytoplasm. It carries out the reaction an aldehyde + O2 + H2O = a carboxylate + H2O2 + H(+). It catalyses the reaction retinal + O2 + H2O = retinoate + H2O2 + H(+). With respect to regulation, inhibited by menadione and isovanillin. Not inhibited by allopurinol, a xanthine dehydrogenase potent inhibitor. Inhibited by the flavonoids quercetin, myricetin and genistein. Nitric oxide generation is inhibited by raloxifene and competitively inhibited by an increase in oxygen levels. In terms of biological role, oxidase with broad substrate specificity, oxidizing aromatic azaheterocycles, such as N1-methylnicotinamide, N-methylphthalazinium and phthalazine, as well as aldehydes, such as benzaldehyde, retinal, pyridoxal, and vanillin. Plays a role in the metabolism of xenobiotics and drugs containing aromatic azaheterocyclic substituents. Participates in the bioactivation of prodrugs such as famciclovir, catalyzing the oxidation step from 6-deoxypenciclovir to penciclovir, which is a potent antiviral agent. Is probably involved in the regulation of reactive oxygen species homeostasis. Is a prominent source of superoxide generation via the one-electron reduction of molecular oxygen. Also catalyzes nitric oxide (NO) production; under anaerobic conditions, reduces nitrite to NO with NADH or aldehyde as electron donor, but under aerobic conditions, NADH is the preferred substrate. These reactions may be catalyzed by several isozymes. May play a role in adipogenesis. The sequence is that of Aldehyde oxidase 1 from Rattus norvegicus (Rat).